The chain runs to 254 residues: Triosephosphate isomerase (254 aa).

Position 10–12 (10–12 (NWK)) interacts with substrate. Residue His-99 is the Electrophile of the active site. Glu-169 (proton acceptor) is an active-site residue. Residues Gly-175, Ser-215, and 236-237 (GG) each bind substrate.

This sequence belongs to the triosephosphate isomerase family. As to quaternary structure, homodimer.

It localises to the cytoplasm. It catalyses the reaction D-glyceraldehyde 3-phosphate = dihydroxyacetone phosphate. It functions in the pathway carbohydrate biosynthesis; gluconeogenesis. Its pathway is carbohydrate degradation; glycolysis; D-glyceraldehyde 3-phosphate from glycerone phosphate: step 1/1. In terms of biological role, involved in the gluconeogenesis. Catalyzes stereospecifically the conversion of dihydroxyacetone phosphate (DHAP) to D-glyceraldehyde-3-phosphate (G3P). This is Triosephosphate isomerase from Chlamydia caviae (strain ATCC VR-813 / DSM 19441 / 03DC25 / GPIC) (Chlamydophila caviae).